The sequence spans 272 residues: tRNA pseudouridine synthase B (272 aa).

The Nucleophile role is filled by Asp-38.

The protein belongs to the pseudouridine synthase TruB family. Type 1 subfamily.

The enzyme catalyses uridine(55) in tRNA = pseudouridine(55) in tRNA. Its function is as follows. Responsible for synthesis of pseudouridine from uracil-55 in the psi GC loop of transfer RNAs. This chain is tRNA pseudouridine synthase B, found in Campylobacter jejuni (strain RM1221).